The sequence spans 359 residues: MASTGRVLLLSPPSLSSHPEKLNAILGSHTRDRTDLQMLDRLVHGLVSLPASTYDIVLLLTGADNTLAEPYSLVTRDIIQQVVHSLKPAGKLRSQDNKAWGLRSSGNNSDDDNDNDELTFRNEAILAGLVFDDNGELLKPDVAAQQAVPLKLGRRKKEKERRHPSGNDVTNGKVNAPSSNGVNASTSTATATATTTTTTTPKTNPAPSGVGFIDFSDDYGVPMEEDPQGSDDELIDEDELLGEDDMGRPIVQPPECRPKPGKRRRACKDCSCGLSQKLEAEDKAKRATADKALETIMAPTMKLGSSELAEVDFTVQGKVGSCGNCSLGDAFRCDGCPYIGLPAFKPGEEVRLLNNDVQL.

The N-terminal SAM-like domain stretch occupies residues 1-148 (MASTGRVLLL…KPDVAAQQAV (148 aa)). 2 disordered regions span residues 97–116 (NKAWGLRSSGNNSDDDNDND) and 149–210 (PLKL…PSGV). A linker region spans residues 149-246 (PLKLGRRKKE…EDELLGEDDM (98 aa)). Basic residues predominate over residues 152 to 164 (LGRRKKEKERRHP). Residues 167–183 (NDVTNGKVNAPSSNGVN) show a composition bias toward polar residues. The span at 184–200 (ASTSTATATATTTTTTT) shows a compositional bias: low complexity. [2Fe-2S] cluster contacts are provided by C256, C267, C270, and C272. The tract at residues 256-272 (CRPKPGKRRRACKDCSC) is fe-S binding site A. The [4Fe-4S] cluster site is built by C322, C325, C333, and C336. 2 consecutive short sequence motifs (cx2C motif) follow at residues 322 to 325 (CGNC) and 333 to 336 (CDGC). Positions 322–336 (CGNCSLGDAFRCDGC) are fe-S binding site B.

Belongs to the anamorsin family. Monomer. Interacts with TAH18. Interacts with MIA40. The cofactor is [2Fe-2S] cluster. It depends on [4Fe-4S] cluster as a cofactor.

It is found in the cytoplasm. Its subcellular location is the mitochondrion intermembrane space. Component of the cytosolic iron-sulfur (Fe-S) protein assembly (CIA) machinery required for the maturation of extramitochondrial Fe-S proteins. Part of an electron transfer chain functioning in an early step of cytosolic Fe-S biogenesis, facilitating the de novo assembly of a [4Fe-4S] cluster on the scaffold complex CFD1-NBP35. Electrons are transferred to DRE2 from NADPH via the FAD- and FMN-containing protein TAH18. TAH18-DRE2 are also required for the assembly of the diferric tyrosyl radical cofactor of ribonucleotide reductase (RNR), probably by providing electrons for reduction during radical cofactor maturation in the catalytic small subunit RNR2. This chain is Fe-S cluster assembly protein DRE2, found in Blastomyces gilchristii (strain SLH14081) (Blastomyces dermatitidis).